A 280-amino-acid chain; its full sequence is Acetyl-coenzyme A carboxylase carboxyl transferase subunit beta (280 aa).

Positions 24-280 (AWIKCDKCKN…IYTLIRHTHG (257 aa)) constitute a CoA carboxyltransferase N-terminal domain. Residues Cys28, Cys31, Cys47, and Cys50 each coordinate Zn(2+). The segment at 28–50 (CDKCKNILYIEDLLKNLKICPHC) adopts a C4-type zinc-finger fold.

This sequence belongs to the AccD/PCCB family. As to quaternary structure, acetyl-CoA carboxylase is a heterohexamer composed of biotin carboxyl carrier protein (AccB), biotin carboxylase (AccC) and two subunits each of ACCase subunit alpha (AccA) and ACCase subunit beta (AccD). Zn(2+) serves as cofactor.

Its subcellular location is the cytoplasm. It carries out the reaction N(6)-carboxybiotinyl-L-lysyl-[protein] + acetyl-CoA = N(6)-biotinyl-L-lysyl-[protein] + malonyl-CoA. The protein operates within lipid metabolism; malonyl-CoA biosynthesis; malonyl-CoA from acetyl-CoA: step 1/1. Component of the acetyl coenzyme A carboxylase (ACC) complex. Biotin carboxylase (BC) catalyzes the carboxylation of biotin on its carrier protein (BCCP) and then the CO(2) group is transferred by the transcarboxylase to acetyl-CoA to form malonyl-CoA. The protein is Acetyl-coenzyme A carboxylase carboxyl transferase subunit beta of Sulfurihydrogenibium sp. (strain YO3AOP1).